The following is a 117-amino-acid chain: Large ribosomal subunit protein bL19 (117 aa).

The protein belongs to the bacterial ribosomal protein bL19 family.

Functionally, this protein is located at the 30S-50S ribosomal subunit interface and may play a role in the structure and function of the aminoacyl-tRNA binding site. The sequence is that of Large ribosomal subunit protein bL19 from Azobacteroides pseudotrichonymphae genomovar. CFP2.